Here is a 415-residue protein sequence, read N- to C-terminus: Coenzyme F420 hydrogenase subunit alpha (415 aa).

Positions 68, 71, 391, and 394 each coordinate Ni(2+).

Belongs to the [NiFe]/[NiFeSe] hydrogenase large subunit family. Heterocomplex of the form (alpha(1)beta(1)gamma(1))(8). Ni(2+) serves as cofactor. Iron-sulfur cluster is required as a cofactor. Requires FAD as cofactor.

The catalysed reaction is oxidized coenzyme F420-(gamma-L-Glu)(n) + H2 + H(+) = reduced coenzyme F420-(gamma-L-Glu)(n). In terms of biological role, reduces the physiological low-potential two-electron acceptor coenzyme F420, and the artificial one-electron acceptor methylviologen. This is Coenzyme F420 hydrogenase subunit alpha (frhA) from Methanocaldococcus jannaschii (strain ATCC 43067 / DSM 2661 / JAL-1 / JCM 10045 / NBRC 100440) (Methanococcus jannaschii).